The following is a 1111-amino-acid chain: MKSKHYPDTVSSPDFLSLEKEIIKFWQENKVFERSVEERSKDNCFVFYDGPPFANGLPHYGHLLTGFIKDAFARYQTMLQKRVERRFGWDCHGLPAEMGAEKELGISGRTEIEKFGIDKFNDHCRTSVMKFSSEWEKYVNRQARWVDFHNDYKTMDKSFMESVMWAFKQLYDKGLVYESVRVVPYSWACETPLSNFETRLDNAYREKVSKAVTVAFELLENPQQFKSVKRKCKLLAWTTTPWTLPSNLALAIGKDIKYCAVSVHPLMSFQRVTLESISGSQCLGTGMTGSSEGSSMNGEIYIFAESYLEKFISHSEQNNIPYENCNIKLKANDLAGLSYKPLFDYFKDTKNAFRVFIADYVTEEDGTGVVHTAPGFGEEDFYLCQSHDIPVICPIDNSGKFTAEVSDLAGVHVFDANDTVIKKLKGQGSWFKTEQYIHNYPHCWRTDTPLIYRTMPSWYVAVTKFKSRMVELNKRVNWIPNHIRDGQFGKWLEGAHDWSISRNRFWGTPIPVWKSDDARYPRVDVYGSIEELERDFNVKIDDLHRPFIDTLTRLNPDDPTGKSVMRRVPDVFDCWFESGSMPFAQIHYPFENKEWFESADFITEYIAQTRGWFYTLFVLSTALFNREPFKNCICHGVVLDVKGQKLSKRLNNYADPMEVFDRYGSDALRFLMLSGSIICGGNLLLDKEGNSIRDVLKNVIKPIWNSYHFFTMYANADGIKAEVCKDYQSTIDRYMISKCFEAVESIQASMNSYSSQEACKILIDFFEVLNNWYIRRSRERFWKSDLDQDKTDAYNVLYTVFYYILRAAAPLLPLITENIWQGLKYEETSVHLANFPQLEKFDSQLIAKMDLVREVCNSALSIRNTFNIRIRQPLGSMIIYHQSSCSFLEGEPLSVIPEFFPVIQVADTGIQCAADSNEYQEMIKDEVNVKSLELVNRLEGIASLELKLNFPLLGKRIPDKIKKLVQYVKEGKWKQVENEQIFLGDESENYIIEKGEYELLLKANSEYSSVFDNNKGIVILNTELNDELILEGLARDVVRLIQETRKQADFHISDRIRVIIKTEEEKIKEAINTWFEYIKEQTLALSLDINTEIGTNFYSKEYQDLSVSIER.

The short motif at 52–62 (PFANGLPHYGH) is the 'HIGH' region element. Positions 645–649 (KLSKR) match the 'KMSKS' region motif. Lys648 provides a ligand contact to ATP.

Belongs to the class-I aminoacyl-tRNA synthetase family. IleS type 2 subfamily. Monomer. Requires Zn(2+) as cofactor.

The protein localises to the cytoplasm. It catalyses the reaction tRNA(Ile) + L-isoleucine + ATP = L-isoleucyl-tRNA(Ile) + AMP + diphosphate. Functionally, catalyzes the attachment of isoleucine to tRNA(Ile). As IleRS can inadvertently accommodate and process structurally similar amino acids such as valine, to avoid such errors it has two additional distinct tRNA(Ile)-dependent editing activities. One activity is designated as 'pretransfer' editing and involves the hydrolysis of activated Val-AMP. The other activity is designated 'posttransfer' editing and involves deacylation of mischarged Val-tRNA(Ile). The protein is Isoleucine--tRNA ligase of Wolbachia pipientis wMel.